We begin with the raw amino-acid sequence, 729 residues long: E3 ubiquitin-protein ligase Trim36 (729 aa).

The RING-type; degenerate zinc finger occupies 33-84; the sequence is CPACKELFTHPLILPCQHSVCHKCVKELLLSLDDSFNDVASDSSNQSSPRLR. B box-type zinc fingers lie at residues 154 to 192 and 207 to 249; these read AIMCDLCKPPPQESTKSCMDCSASYCNECFKIYHPWGTV and PKVL…VTTM. The Zn(2+) site is built by Cys-212, His-215, Cys-235, and His-241. The stretch at 271-302 forms a coiled coil; it reads ESQVKSQISELNLLMKETECNGERAKEEALAH. The COS domain occupies 356 to 413; that stretch reads LKETDQSCFVQTAKQLHLRIQKATESLKSFRPAAQASFEDYVVNISKQTEVLGELSFF. The Fibronectin type-III domain maps to 416 to 511; it reads GIDIPEINEE…RELILHTPPA (96 aa). The region spanning 509–723 is the B30.2/SPRY domain; it reads PPAPVFSFLF…LEEAITAKYL (215 aa). Positions 606–626 are disordered; sequence RDAASPRYEQDSGHDSGSEDA. The span at 613 to 622 shows a compositional bias: basic and acidic residues; that stretch reads YEQDSGHDSG.

The protein belongs to the TRIM/RBCC family. Interacts with CENPH. In terms of tissue distribution, expressed in testis. Strongly expressed in the neural tube region in 14.5 dpc embryos.

Its subcellular location is the cytoplasm. It localises to the cytoplasmic vesicle. It is found in the secretory vesicle. The protein resides in the acrosome. The protein localises to the cytoskeleton. It catalyses the reaction S-ubiquitinyl-[E2 ubiquitin-conjugating enzyme]-L-cysteine + [acceptor protein]-L-lysine = [E2 ubiquitin-conjugating enzyme]-L-cysteine + N(6)-ubiquitinyl-[acceptor protein]-L-lysine.. In terms of biological role, E3 ubiquitin-protein ligase which mediates ubiquitination and subsequent proteasomal degradation of target proteins. Involved in chromosome segregation and cell cycle regulation. May play a role in the acrosome reaction and fertilization. In Mus musculus (Mouse), this protein is E3 ubiquitin-protein ligase Trim36 (Trim36).